The primary structure comprises 880 residues: Phosphoinositide 3-kinase regulatory subunit 5 (880 aa).

The residue at position 1 (methionine 1) is an N-acetylmethionine. The segment at 25-101 is heterodimerization; it reads SLSRRSTSWS…TPHFPPDSDL (77 aa). Disordered regions lie at residues 315-339, 389-416, 454-510, and 565-601; these read GILG…TDGH, SGYV…GHRR, RRAG…SGDE, and HGTS…TPWE. The span at 318 to 335 shows a compositional bias: acidic residues; that stretch reads GDDEEEEEEEEEVEEDLE. 2 positions are modified to phosphoserine: serine 458 and serine 507. Pro residues predominate over residues 571–585; sequence ACPPPRSQTPSPPTD. Positions 653 to 753 are interaction with beta-gamma G protein dimers; that stretch reads PILADMLLYY…WSNLEKVCTS (101 aa).

In terms of assembly, heterodimer of a catalytic subunit (PIK3CG/p120) and a regulatory (PIK3R5a/p101) subunit. Interacts with beta-gamma G protein dimers. Ubiquitously expressed with high expression in fetal brain compared to adult brain. Abundant expression is observed in cerebellum, cerebral cortex, cerebral meninges, and vermis cerebelli.

Its subcellular location is the nucleus. It is found in the cytoplasm. The protein localises to the cell membrane. With respect to regulation, greatly activated by G gamma proteins. Functionally, regulatory subunit of the PI3K gamma complex. Required for recruitment of the catalytic subunit to the plasma membrane via interaction with beta-gamma G protein dimers. Required for G protein-mediated activation of PIK3CG. The sequence is that of Phosphoinositide 3-kinase regulatory subunit 5 (PIK3R5) from Homo sapiens (Human).